The following is a 160-amino-acid chain: Transcription elongation factor GreA (160 aa).

Positions 49–75 (SEYDEAKNDQAFTEGRIIQLENMLKNA) form a coiled coil.

Belongs to the GreA/GreB family.

Its function is as follows. Necessary for efficient RNA polymerase transcription elongation past template-encoded arresting sites. The arresting sites in DNA have the property of trapping a certain fraction of elongating RNA polymerases that pass through, resulting in locked ternary complexes. Cleavage of the nascent transcript by cleavage factors such as GreA or GreB allows the resumption of elongation from the new 3'terminus. GreA releases sequences of 2 to 3 nucleotides. The polypeptide is Transcription elongation factor GreA (Clostridium beijerinckii (strain ATCC 51743 / NCIMB 8052) (Clostridium acetobutylicum)).